The sequence spans 246 residues: Pyruvate formate-lyase 1-activating enzyme (246 aa).

In terms of domain architecture, Radical SAM core spans 16–239; it reads VDGPGIRFIT…MERVKGILEQ (224 aa). Positions 30, 34, and 37 each coordinate [4Fe-4S] cluster. Residues 36–38, Gly-79, 130–132, and His-203 contribute to the S-adenosyl-L-methionine site; these read YCH and DLK.

This sequence belongs to the organic radical-activating enzymes family. The cofactor is [4Fe-4S] cluster.

It is found in the cytoplasm. It carries out the reaction glycyl-[formate C-acetyltransferase] + reduced [flavodoxin] + S-adenosyl-L-methionine = glycin-2-yl radical-[formate C-acetyltransferase] + semiquinone [flavodoxin] + 5'-deoxyadenosine + L-methionine + H(+). Activation of pyruvate formate-lyase 1 under anaerobic conditions by generation of an organic free radical, using S-adenosylmethionine and reduced flavodoxin as cosubstrates to produce 5'-deoxy-adenosine. The chain is Pyruvate formate-lyase 1-activating enzyme (pflA) from Escherichia coli O157:H7.